A 506-amino-acid chain; its full sequence is MANKLLALSLFLLFSGCFASTFRQQPQQNECQFQRLNALEPDNSVKSEAGTIETWNPNNDQLRCAGVALSRCTIQRNGLRRPFYTNAPQEIYIQQGRGIFGLIFPGCRETYEEPQEQEQGQGPRPQDRHQKVEHFREGDIIAVPTGVPFWMYNNEQTPVIAITLIDTTNLDNQLDQIPRRFYLSGNQEQEFLQYQQKEGGQGQQQEGGNEGGNVLSGFNDEFLEEAFSVDREIVRNIKGKNDDREGSIVEVKEGLKVISPPTLRPRQGREEEEEEEEEEEERRGDRRRHRPHHHEEEEEEEEWSHQVRRVRRPHHHREDRNGLEETLCTLKLRHNIGQSTSPDAYNPQAGRLKTLTSLDFPILRWLGLAAEHGSIYKNAMFVPYYNVNANSILYVLNGSAWFQVVDCSGNAVFNGELNEGQVLTIPQNYAVAIKSLDDNFSYVAFKTNDIPQIAALAGLTSSIRALPLDVVAHAFNLDRDQARQLKNNNPYKFLVPPPQSQLRAVA.

The N-terminal stretch at 1–19 is a signal peptide; it reads MANKLLALSLFLLFSGCFA. 2 disulfide bridges follow: Cys31–Cys64 and Cys107–Cys328. The Cupin type-1 1 domain occupies 36-235; that stretch reads LNALEPDNSV…AFSVDREIVR (200 aa). Disordered stretches follow at residues 111–131, 195–216, and 251–322; these read YEEP…RHQK, QQKE…NVLS, and VKEG…DRNG. The segment covering 195–207 has biased composition (low complexity); it reads QQKEGGQGQQQEG. Positions 270–280 are enriched in acidic residues; it reads EEEEEEEEEEE. Residues 306–315 show a composition bias toward basic residues; that stretch reads QVRRVRRPHH. Residues 334 to 483 enclose the Cupin type-1 2 domain; it reads HNIGQSTSPD…AFNLDRDQAR (150 aa). Residues Asn397 and Asn439 are each glycosylated (N-linked (GlcNAc...) asparagine).

The protein belongs to the 11S seed storage protein (globulins) family. Hexamer; each subunit is composed of an acidic and a basic chain derived from a single precursor and linked by a disulfide bond. Component of globulins complexes which accumulate in seeds. In terms of tissue distribution, expressed in developing cotyledons and in the embryonic axis of germinating seeds.

In terms of biological role, sulfur-rich seed storage protein. This protein found in the seeds of many leguminous and non-leguminous plants is the source of sulfur-containing amino acids in seed meals. The sequence is that of Conglutin alpha 1 from Lupinus angustifolius (Narrow-leaved blue lupine).